Consider the following 235-residue polypeptide: 7-cyano-7-deazaguanine synthase (235 aa).

12 to 22 provides a ligand contact to ATP; it reads FSGGQDSTACL. Zn(2+) contacts are provided by Cys-200, Cys-215, Cys-218, and Cys-221.

Belongs to the QueC family. It depends on Zn(2+) as a cofactor.

It carries out the reaction 7-carboxy-7-deazaguanine + NH4(+) + ATP = 7-cyano-7-deazaguanine + ADP + phosphate + H2O + H(+). It participates in purine metabolism; 7-cyano-7-deazaguanine biosynthesis. In terms of biological role, catalyzes the ATP-dependent conversion of 7-carboxy-7-deazaguanine (CDG) to 7-cyano-7-deazaguanine (preQ(0)). This is 7-cyano-7-deazaguanine synthase from Methylibium petroleiphilum (strain ATCC BAA-1232 / LMG 22953 / PM1).